A 271-amino-acid chain; its full sequence is uncharacterized protein (271 aa).

The protein belongs to the anhydro-N-acetylmuramic acid kinase family.

This is an uncharacterized protein from Yersinia enterocolitica.